The primary structure comprises 290 residues: GTPase Era (290 aa).

The Era-type G domain maps to lysine 2 to glutamate 169. The tract at residues glycine 10–serine 17 is G1. Glycine 10 to serine 17 serves as a coordination point for GTP. Residues glutamine 36–asparagine 40 form a G2 region. Residues aspartate 57–glycine 60 form a G3 region. Residues aspartate 57–phenylalanine 61 and asparagine 119–aspartate 122 contribute to the GTP site. Positions asparagine 119–aspartate 122 are G4. The tract at residues isoleucine 148–alanine 150 is G5. A KH type-2 domain is found at leucine 200–lysine 276.

The protein belongs to the TRAFAC class TrmE-Era-EngA-EngB-Septin-like GTPase superfamily. Era GTPase family. In terms of assembly, monomer.

It is found in the cytoplasm. The protein resides in the cell inner membrane. Functionally, an essential GTPase that binds both GDP and GTP, with rapid nucleotide exchange. Plays a role in 16S rRNA processing and 30S ribosomal subunit biogenesis and possibly also in cell cycle regulation and energy metabolism. This chain is GTPase Era, found in Borrelia duttonii (strain Ly).